The sequence spans 65 residues: DNA gyrase inhibitor YacG (65 aa).

Zn(2+)-binding residues include Cys9, Cys12, Cys28, and Cys32. A disordered region spans residues 45 to 65 (KRIPSSGDLSESDDWSEEPKQ). Acidic residues predominate over residues 54–65 (SESDDWSEEPKQ).

This sequence belongs to the DNA gyrase inhibitor YacG family. In terms of assembly, interacts with GyrB. Zn(2+) is required as a cofactor.

Inhibits all the catalytic activities of DNA gyrase by preventing its interaction with DNA. Acts by binding directly to the C-terminal domain of GyrB, which probably disrupts DNA binding by the gyrase. The polypeptide is DNA gyrase inhibitor YacG (Shigella boydii serotype 18 (strain CDC 3083-94 / BS512)).